We begin with the raw amino-acid sequence, 131 residues long: Maturin (131 aa).

Position 34 is a phosphotyrosine (Tyr-34). The span at 107-120 shows a compositional bias: acidic residues; that stretch reads FEEYSADVEEEEPE. Positions 107–131 are disordered; sequence FEEYSADVEEEEPEADHPQMGVSQQ.

This sequence belongs to the MTURN family. In terms of processing, phosphorylation at Tyr-34 is essential for its ability to promote megakaryocyte differentiation.

Its subcellular location is the cytoplasm. Functionally, promotes megakaryocyte differentiation by enhancing ERK and JNK signaling as well as up-regulating RUNX1 and FLI1 expression. Represses NF-kappa-B transcriptional activity by inhibiting phosphorylation of RELA at 'Ser- 536'. May be involved in early neuronal development. The chain is Maturin (MTURN) from Bos taurus (Bovine).